Reading from the N-terminus, the 903-residue chain is FIGNL1-interacting regulator of recombination and mitosis (903 aa).

2 positions are modified to phosphoserine: Ser-101 and Ser-795. An N6-acetyllysine modification is found at Lys-843.

Interacts (via its N-terminal region) with PLK1; controls PLK1 kinase activity. Interacts (via the KVVXF motif) with PPP1CC; controls PLK1 kinase activity. Interacts with FIGNL1; may regulate homologous recombination. Phosphorylation at Ser-101 by PLK1 strengthens FIRRM-PLK1 interaction. Phosphorylation at Ser-795 by PLK1 negatively regulates its interaction with PPP1CC.

It is found in the chromosome. Its subcellular location is the centromere. The protein resides in the kinetochore. It localises to the nucleus. The protein localises to the midbody. It is found in the cytoplasm. Its subcellular location is the cytoskeleton. The protein resides in the spindle. Functionally, regulates PLK1 kinase activity at kinetochores and promotes faithful chromosome segregation in prometaphase by bridging kinase and phosphatase activities. Phosphorylation of FIRRM by PLK1 negatively regulates its interaction with the phosphatase, PPP1CC, thus creating a negative feedback loop for maintaining proper PLK1 kinase activity during mitosis. In complex with FIGL1 may regulate homologous recombination. In Mus musculus (Mouse), this protein is FIGNL1-interacting regulator of recombination and mitosis.